The chain runs to 175 residues: ATP synthase subunit delta (175 aa).

The protein belongs to the ATPase delta chain family. In terms of assembly, F-type ATPases have 2 components, F(1) - the catalytic core - and F(0) - the membrane proton channel. F(1) has five subunits: alpha(3), beta(3), gamma(1), delta(1), epsilon(1). F(0) has three main subunits: a(1), b(2) and c(10-14). The alpha and beta chains form an alternating ring which encloses part of the gamma chain. F(1) is attached to F(0) by a central stalk formed by the gamma and epsilon chains, while a peripheral stalk is formed by the delta and b chains.

It localises to the cell inner membrane. Its function is as follows. F(1)F(0) ATP synthase produces ATP from ADP in the presence of a proton or sodium gradient. F-type ATPases consist of two structural domains, F(1) containing the extramembraneous catalytic core and F(0) containing the membrane proton channel, linked together by a central stalk and a peripheral stalk. During catalysis, ATP synthesis in the catalytic domain of F(1) is coupled via a rotary mechanism of the central stalk subunits to proton translocation. Functionally, this protein is part of the stalk that links CF(0) to CF(1). It either transmits conformational changes from CF(0) to CF(1) or is implicated in proton conduction. This is ATP synthase subunit delta from Xylella fastidiosa (strain M12).